An 889-amino-acid polypeptide reads, in one-letter code: MSNPFVQIVEPLDAKEPVKKFFNLSKLEDVRYARLPFSIRVLLEAAIRNCDEFLVKKQDVENILNWKVMQHKNVEVPFKPARVILQDFTGVPAVVDFAAMRDAVKKLGGDPEKINPICPADLVIDHSIQVDFNRRSDSLQKNQDLEFERNKERFEFLKWGSQAFKNMRIIPPGSGIIHQVNLEYLARVVMDQDGYYYPDSVVGTDSHTTMVDGLGVLGWGVGGIEAEAVMLGQPISMVLPEVVGYKLLGNPQPLVTSTDIVLTITKHLRQVGVVGKFVEFFGPGVAQLSIADRATIANMCPEYGATAAYFPVDDISIGYLVQTGRDKEKVLCTKKYLEAVGMLRDFKNSSQDPDFTQVVELDLHTVVPCCSGPKRPQDKVAVSDMKKDFETCLGAKQGFKGFQIAPDRHNSVIKFNFEGCDFELAHGSVVIAAITSCTNTSNPSVMLGAGLLAKKAVEAGLTVKPYIKTSLSPGSGVVTYYLRESGVMSYLSQLGFDVVGYGCMTCIGNSGPLPDSVVEAITQGDLVAVGVLSGNRNFEGRVHPNTRANYLASPPLVIAYAIAGTVRIDFEKEPLGISASGKKIFLKDIWPTRNEIQAVERQYVIPGMFKEVYQKIETVNEAWNALDAPSDKLYTWNPKSTYIKSPPFFDGLTLALQTPKTIEDAYVLLNFGDSVTTDHISPAGNIARNSPAARYLTSRGLTPREFNSYGSRRGNDAVMARGTFANIRLVNKFIDKQGPQTIHFPSGETLDVFDAAERYKQAGHPLIVLAGKEYGAGSSRDWAAKGPFLLGVKAVLAESYERIHRSNLVGMGVIPLQYLPGEDARTLGLTGRERYTIIIPENLKPQMNIQIKLDTGKTFHAIMRFDTDVELTYFHNGGILNYMIRKMAS.

Substrate-binding positions include Q86 and 205–207 (DSH). Residues C437, C503, and C506 each coordinate [4Fe-4S] cluster. Substrate-binding positions include R536, R541, R699, and 779 to 780 (SR).

Belongs to the aconitase/IPM isomerase family. [4Fe-4S] cluster is required as a cofactor.

The protein resides in the cytoplasm. Its subcellular location is the cytosol. It catalyses the reaction citrate = D-threo-isocitrate. In terms of biological role, bifunctional iron sensor that switches between 2 activities depending on iron availability. Iron deprivation, promotes its mRNA binding activity through which it regulates the expression of genes involved in iron uptake, sequestration and utilization. Binds to iron-responsive elements (IRES) in the untranslated region of target mRNAs preventing for instance the translation of ferritin and aminolevulinic acid synthase and stabilizing the transferrin receptor mRNA. Functionally, conversely, when cellular iron levels are high, binds a 4Fe-4S cluster which precludes RNA binding activity and promotes the aconitase activity, the isomerization of citrate to isocitrate via cis-aconitate. The sequence is that of Cytoplasmic aconitate hydratase (ACO1) from Gallus gallus (Chicken).